The following is a 300-amino-acid chain: Putative S-adenosyl-L-methionine-dependent methyltransferase MUL_0817 (300 aa).

S-adenosyl-L-methionine contacts are provided by residues D127 and 156–157 (DL).

This sequence belongs to the UPF0677 family.

Exhibits S-adenosyl-L-methionine-dependent methyltransferase activity. The polypeptide is Putative S-adenosyl-L-methionine-dependent methyltransferase MUL_0817 (Mycobacterium ulcerans (strain Agy99)).